Consider the following 295-residue polypeptide: MNHLTTETRNIQTMHLDEMNLSDALKTMNQEDQLVPKAIEPVIPNLTKVIESAIQRFNNGGRIIYIGAGTSGRLGVLDAAECVPTFNVSPNDIIGIIAGGQKAMTVAIEGAEDDAEQGAQDLKNIHLQSKDIVVGISASGRTPYVKGALVYANKMNAETVALSCNVHSDISKNSNHVLEINVGPEVLTGSTRLKSGTAQKLVLNMISTMTMIGVGKVYDNLMVDLRPTNQKLIHRSIRIIQDVCDLNHQEAIELYEKSDHNIKIAIVMHLCSTTQQDARLRLKQNNGVIKQAINT.

Residues 53-216 enclose the SIS domain; that stretch reads AIQRFNNGGR…STMTMIGVGK (164 aa). Glu-81 (proton donor) is an active-site residue. The active site involves Glu-112.

The protein belongs to the GCKR-like family. MurNAc-6-P etherase subfamily. As to quaternary structure, homodimer.

It catalyses the reaction N-acetyl-D-muramate 6-phosphate + H2O = N-acetyl-D-glucosamine 6-phosphate + (R)-lactate. It participates in amino-sugar metabolism; N-acetylmuramate degradation. Specifically catalyzes the cleavage of the D-lactyl ether substituent of MurNAc 6-phosphate, producing GlcNAc 6-phosphate and D-lactate. This is N-acetylmuramic acid 6-phosphate etherase from Staphylococcus epidermidis (strain ATCC 35984 / DSM 28319 / BCRC 17069 / CCUG 31568 / BM 3577 / RP62A).